The primary structure comprises 293 residues: Beta-porphyranase B (293 aa).

A signal peptide spans 1–21 (MKLSNQFLITITLLITSITFA). Positions 38-291 (QEWKLIENMS…WVRSWQLVDS (254 aa)) constitute a GH16 domain. 5 residues coordinate substrate: Trp-67, Arg-70, Glu-156, Glu-161, and Glu-256. The active-site Nucleophile is the Glu-156. Catalysis depends on Glu-161, which acts as the Proton donor.

The protein belongs to the glycosyl hydrolase 16 family.

The protein resides in the periplasm. The enzyme catalyses Hydrolysis of beta-D-galactopyranose-(1-&gt;4)-alpha-L-galactopyranose-6-sulfate linkages in porphyran.. Its function is as follows. Cleaves the sulfated polysaccharide porphyran at the (1-&gt;4) linkages between beta-D-galactopyranose and alpha-L-galactopyranose-6-sulfate, forming mostly the disaccharide alpha-L-galactopyranose-6-sulfate-(1-&gt;3)-beta-D-galactose. Some longer oligosaccharides of even number of residues are also observed. Inactive on the non-sulfated agarose portion of the porphyran backbone. In contrast to PorA, tolerates the presence of 3-6-anhydro-L-galactose in subsite -2. The sequence is that of Beta-porphyranase B (porB) from Zobellia galactanivorans (strain DSM 12802 / CCUG 47099 / CIP 106680 / NCIMB 13871 / Dsij).